A 1075-amino-acid polypeptide reads, in one-letter code: Putative type I restriction enzyme MjaVIIP endonuclease subunit (1075 aa).

It belongs to the HsdR family. In terms of assembly, the type I restriction/modification system is composed of three polypeptides R, M and S.

The catalysed reaction is Endonucleolytic cleavage of DNA to give random double-stranded fragments with terminal 5'-phosphates, ATP is simultaneously hydrolyzed.. Functionally, the restriction (R) subunit of a type I restriction enzyme that recognizes 5'-CAAN(7)TGG-3' and cleaves a random distance away. The R subunit is required for both endonuclease and ATPase activities but not for modification. After locating a non-methylated recognition site, the enzyme complex serves as a molecular motor that translocates DNA in an ATP-dependent manner until a collision occurs that triggers cleavage. The protein is Putative type I restriction enzyme MjaVIIP endonuclease subunit of Methanocaldococcus jannaschii (strain ATCC 43067 / DSM 2661 / JAL-1 / JCM 10045 / NBRC 100440) (Methanococcus jannaschii).